A 542-amino-acid chain; its full sequence is MAKEIFFSDKARNGLFEGVTKLADAVKVTMGPRGRNVLIQKSFGAPHITKDGVSVAREIELEDTLENMGAQLVKEVASNTADEAGDGTTTATVLAHSIFKEGLRNITAGANPIEVKRGMDKASAAIIEELKKISKEVKDKKEIAQVATISANSDETIGNLIAEAMDRVGKDGVITVEEAKGINDDLEVVEGMQFDRGYLSPYFVTNTEKMTCEMENPLILITDSKITSLKDLIPVLEQIQQSGRPLLIISDDLEGEALATLVLNRLKGVLNIAAVKAPGFGDRKKEMLKDIAILTGANVITEELGLSLDKATLDDLGQAGRVVIDKDNTVIVDGKGDSAAVDARVAEIKIQVENTTSEYDKEKLQERLAKLSGGVAVIKVGAATETEMKEKKDRVDDALSATKAAVDEGIVIGGGAALAKASKAVKLDLEHDEAVGAEIILRAVYAPMKQIAQNAGFDAGVVADKIANNSEANLGFNAATGEYVNMLEAGIIDPLKVARVALQNATSVASLLLTTEATVSDIKEAPTPAPTMPDMGGMPGMM.

ATP contacts are provided by residues 29–32, lysine 50, 86–90, glycine 414, 477–479, and aspartate 493; these read TMGP, DGTTT, and NAA.

The protein belongs to the chaperonin (HSP60) family. Forms a cylinder of 14 subunits composed of two heptameric rings stacked back-to-back. Interacts with the co-chaperonin GroES.

Its subcellular location is the cytoplasm. The enzyme catalyses ATP + H2O + a folded polypeptide = ADP + phosphate + an unfolded polypeptide.. In terms of biological role, together with its co-chaperonin GroES, plays an essential role in assisting protein folding. The GroEL-GroES system forms a nano-cage that allows encapsulation of the non-native substrate proteins and provides a physical environment optimized to promote and accelerate protein folding. The chain is Chaperonin GroEL from Sulfurovum sp. (strain NBC37-1).